The sequence spans 521 residues: Lysine--tRNA ligase (521 aa).

The short motif at 32-40 (PSGTVHIGN) is the 'HIGH' region element. The short motif at 280–284 (KISSS) is the 'KMSKS' region element.

It belongs to the class-I aminoacyl-tRNA synthetase family.

The protein localises to the cytoplasm. It catalyses the reaction tRNA(Lys) + L-lysine + ATP = L-lysyl-tRNA(Lys) + AMP + diphosphate. The polypeptide is Lysine--tRNA ligase (lysS) (Borreliella burgdorferi (strain ATCC 35210 / DSM 4680 / CIP 102532 / B31) (Borrelia burgdorferi)).